The following is a 356-amino-acid chain: Ferrochelatase (356 aa).

Positions 214 and 295 each coordinate Fe cation.

It belongs to the ferrochelatase family.

It is found in the cytoplasm. It carries out the reaction heme b + 2 H(+) = protoporphyrin IX + Fe(2+). It functions in the pathway porphyrin-containing compound metabolism; protoheme biosynthesis; protoheme from protoporphyrin-IX: step 1/1. Functionally, catalyzes the ferrous insertion into protoporphyrin IX. The chain is Ferrochelatase from Paraburkholderia xenovorans (strain LB400).